The primary structure comprises 338 residues: Glyceraldehyde-3-phosphate dehydrogenase, cytosolic (338 aa).

NAD(+) contacts are provided by residues 13–14, Asp-35, and Arg-82; that span reads RI. D-glyceraldehyde 3-phosphate is bound by residues 153–155, Thr-184, 213–214, and Arg-236; these read SCT and TG. The Nucleophile role is filled by Cys-154. Residue Asn-318 participates in NAD(+) binding.

The protein belongs to the glyceraldehyde-3-phosphate dehydrogenase family. In terms of assembly, homotetramer.

It localises to the cytoplasm. It carries out the reaction D-glyceraldehyde 3-phosphate + phosphate + NAD(+) = (2R)-3-phospho-glyceroyl phosphate + NADH + H(+). Its pathway is carbohydrate degradation; glycolysis; pyruvate from D-glyceraldehyde 3-phosphate: step 1/5. Its function is as follows. Key enzyme in glycolysis that catalyzes the first step of the pathway by converting D-glyceraldehyde 3-phosphate (G3P) into 3-phospho-D-glyceroyl phosphate. Essential for the maintenance of cellular ATP levels and carbohydrate metabolism. This Dianthus caryophyllus (Carnation) protein is Glyceraldehyde-3-phosphate dehydrogenase, cytosolic (GAPC).